We begin with the raw amino-acid sequence, 315 residues long: MSDASFDRSMPLSGEGSFGDYFALLKPRVMSLVVFTALVGLLVAPVSLHPMVGFCAILFIAVGAGASGALNMWWDADIDVIMKRTAGRPVPAGKVQPGEALALGLGLSGLSVVMLALATNLLAAGLLAFTIFFYAVVYSMWLKRSTPQNIVIGGAAGAFPPMIGWVAATGSVSLEAVLMFALIFMWTPPHFWALALFMKSDYHDAGVPMLTVTHGRKSTRTHILVYTVLLVPVALGLALTPVAGPLYLATALVLNAIFLKGAWDIWRRDEAQAEADKYATEKRFFKFSLLYLALHFTALLAEAILTRSGLWTFGG.

9 helical membrane-spanning segments follow: residues 21–41 (YFALLKPRVMSLVVFTALVGL), 52–74 (VGFCAILFIAVGAGASGALNMWW), 98–118 (GEALALGLGLSGLSVVMLALA), 121–141 (LLAAGLLAFTIFFYAVVYSMW), 150–170 (IVIGGAAGAFPPMIGWVAATG), 177–197 (VLMFALIFMWTPPHFWALALF), 223–243 (ILVYTVLLVPVALGLALTPVA), 246–266 (LYLATALVLNAIFLKGAWDIW), and 284–304 (FFKFSLLYLALHFTALLAEAI).

The protein belongs to the UbiA prenyltransferase family. Protoheme IX farnesyltransferase subfamily. Interacts with CtaA.

It localises to the cell inner membrane. It catalyses the reaction heme b + (2E,6E)-farnesyl diphosphate + H2O = Fe(II)-heme o + diphosphate. It functions in the pathway porphyrin-containing compound metabolism; heme O biosynthesis; heme O from protoheme: step 1/1. In terms of biological role, converts heme B (protoheme IX) to heme O by substitution of the vinyl group on carbon 2 of heme B porphyrin ring with a hydroxyethyl farnesyl side group. The protein is Protoheme IX farnesyltransferase of Dinoroseobacter shibae (strain DSM 16493 / NCIMB 14021 / DFL 12).